We begin with the raw amino-acid sequence, 298 residues long: UDP-N-acetylenolpyruvoylglucosamine reductase (298 aa).

Residues 27-206 (VGGPAQRLYR…QQQIRRLLRQ (180 aa)) form the FAD-binding PCMH-type domain. Arginine 171 is a catalytic residue. Catalysis depends on serine 220, which acts as the Proton donor. The active site involves glutamate 290.

The protein belongs to the MurB family. It depends on FAD as a cofactor.

The protein resides in the cytoplasm. The catalysed reaction is UDP-N-acetyl-alpha-D-muramate + NADP(+) = UDP-N-acetyl-3-O-(1-carboxyvinyl)-alpha-D-glucosamine + NADPH + H(+). The protein operates within cell wall biogenesis; peptidoglycan biosynthesis. In terms of biological role, cell wall formation. The chain is UDP-N-acetylenolpyruvoylglucosamine reductase from Nitrosococcus oceani (strain ATCC 19707 / BCRC 17464 / JCM 30415 / NCIMB 11848 / C-107).